A 112-amino-acid polypeptide reads, in one-letter code: Small ribosomal subunit protein bS6 (112 aa).

The protein belongs to the bacterial ribosomal protein bS6 family.

In terms of biological role, binds together with bS18 to 16S ribosomal RNA. The sequence is that of Small ribosomal subunit protein bS6 from Azobacteroides pseudotrichonymphae genomovar. CFP2.